A 480-amino-acid chain; its full sequence is Na(+)/H(+) antiporter NhaA (480 aa).

11 helical membrane-spanning segments follow: residues 34–54, 76–96, 113–133, 144–164, 174–194, 197–217, 223–243, 282–302, 312–332, 350–370, and 381–401; these read VGGV…NIPA, LSVA…VAGI, AVLP…VYTL, GWAV…AVIG, FLLT…AIFF, RINF…WLLL, GWYV…NSGV, GLAV…GGAL, LGVV…STWL, IFAV…IGEL, and EVKA…TVLL. Positions 454–480 are disordered; sequence AAEKAAAARHGGAEVPGGAGEEDGRPA.

It belongs to the NhaA Na(+)/H(+) (TC 2.A.33) antiporter family.

The protein resides in the cell membrane. It carries out the reaction Na(+)(in) + 2 H(+)(out) = Na(+)(out) + 2 H(+)(in). Functionally, na(+)/H(+) antiporter that extrudes sodium in exchange for external protons. This chain is Na(+)/H(+) antiporter NhaA, found in Streptomyces antibioticus.